The primary structure comprises 591 residues: Serine/threonine-protein kinase Nek2 (591 aa).

Residues 4–258 (YEVLEQIGKG…AAQLLKHPQL (255 aa)) form the Protein kinase domain. Residues 10–18 (IGKGAFGSA) and Lys33 contribute to the ATP site. Asp129 serves as the catalytic Proton acceptor. Disordered regions lie at residues 309–331 (LGNE…SSTR), 382–408 (ARNQ…TTPN), and 500–534 (RTDG…DTSS). Polar residues-rich tracts occupy residues 391-408 (TSYN…TTPN) and 504-534 (DNGS…DTSS).

The protein belongs to the protein kinase superfamily. NEK Ser/Thr protein kinase family. NIMA subfamily. In terms of tissue distribution, expressed in anthers, pistils and leaves.

The enzyme catalyses L-seryl-[protein] + ATP = O-phospho-L-seryl-[protein] + ADP + H(+). It catalyses the reaction L-threonyl-[protein] + ATP = O-phospho-L-threonyl-[protein] + ADP + H(+). Functionally, may be involved in plant development processes. This Oryza sativa subsp. japonica (Rice) protein is Serine/threonine-protein kinase Nek2.